A 333-amino-acid chain; its full sequence is MIDTTLPLTDIHRHLDGNIRPQTILELGRQYNISLPAHSLETLIPHVQVIANEPDLVSFLTKLDWGVKVLASLDACRRVAFENIEDAARHGLHYVELRFSPGYMAMAHQLPVAGVVEAVIDGVREGCRTFGVQAKLIGIMSRTFGEAACQQELEAFLAHRDQITALDLAGDELGFPGSLFLSHFNRARDAGWHITVHAGEAAGPESIWQAIRELGAERIGHGVKAIEDRALMDFLAEQQIGIESCLTSNIQTSTVAELAAHPLKTFLEHGIRASINTDDPGVQGVDIIHEYTVAAPAAGLSREQIRQAQINGLEMAFLSAEEKRALREKVAAK.

2 residues coordinate Zn(2+): histidine 12 and histidine 14. Histidine 14, aspartate 16, and glycine 170 together coordinate substrate. Histidine 197 is a Zn(2+) binding site. The active-site Proton donor is the glutamate 200. Aspartate 278 provides a ligand contact to Zn(2+). Aspartate 279 contributes to the substrate binding site.

The protein belongs to the metallo-dependent hydrolases superfamily. Adenosine and AMP deaminases family. Adenosine deaminase subfamily. Requires Zn(2+) as cofactor.

It carries out the reaction adenosine + H2O + H(+) = inosine + NH4(+). It catalyses the reaction 2'-deoxyadenosine + H2O + H(+) = 2'-deoxyinosine + NH4(+). Catalyzes the hydrolytic deamination of adenosine and 2-deoxyadenosine. The chain is Adenosine deaminase from Shigella dysenteriae serotype 1 (strain Sd197).